The following is an 89-amino-acid chain: MVMTAEAKAKVIEEYQTKPGDTGSPEVQVALLTARIKYLTDHFKTHKKDFHSRTGLLKMVGQRRNILKYLKSKDVQRYRDLIARLGLRK.

The protein belongs to the universal ribosomal protein uS15 family. Part of the 30S ribosomal subunit. Forms a bridge to the 50S subunit in the 70S ribosome, contacting the 23S rRNA.

Its function is as follows. One of the primary rRNA binding proteins, it binds directly to 16S rRNA where it helps nucleate assembly of the platform of the 30S subunit by binding and bridging several RNA helices of the 16S rRNA. Forms an intersubunit bridge (bridge B4) with the 23S rRNA of the 50S subunit in the ribosome. This is Small ribosomal subunit protein uS15 from Maridesulfovibrio salexigens (strain ATCC 14822 / DSM 2638 / NCIMB 8403 / VKM B-1763) (Desulfovibrio salexigens).